The chain runs to 122 residues: Small ribosomal subunit protein uS13 (122 aa).

Residues 94-122 form a disordered region; the sequence is RGLPVRGQRTKTNARQRKGPRPAIGGRKK.

The protein belongs to the universal ribosomal protein uS13 family. Part of the 30S ribosomal subunit. Forms a loose heterodimer with protein S19. Forms two bridges to the 50S subunit in the 70S ribosome.

Located at the top of the head of the 30S subunit, it contacts several helices of the 16S rRNA. In the 70S ribosome it contacts the 23S rRNA (bridge B1a) and protein L5 of the 50S subunit (bridge B1b), connecting the 2 subunits; these bridges are implicated in subunit movement. Contacts the tRNAs in the A and P-sites. The polypeptide is Small ribosomal subunit protein uS13 (Rubrobacter xylanophilus (strain DSM 9941 / JCM 11954 / NBRC 16129 / PRD-1)).